A 354-amino-acid chain; its full sequence is Erythroferrone (354 aa).

The first 28 residues, 1–28 (MAPARRPAGARLLLVYAGLLAAAAAGLG), serve as a signal peptide directing secretion. Composition is skewed to low complexity over residues 26 to 37 (GLGSPEPGAPSR) and 51 to 62 (PRGPGESRAGPA). A disordered region spans residues 26–123 (GLGSPEPGAP…PGPPGPQGPP (98 aa)). Residues 69–80 (TAERAHSVDPRD) show a composition bias toward basic and acidic residues. The segment covering 94-107 (NGKKRSRGKAKKLK) has biased composition (basic residues). 6 positions are modified to hydroxyproline: Pro111, Pro113, Pro114, Pro116, Pro117, and Pro119. The segment covering 111-123 (PGPPGPPGPQGPP) has biased composition (pro residues). Residues 199–354 (APRVEAAFLC…SHFSAVLLGV (156 aa)) enclose the C1q domain. Residues Asn243, Asn295, and Asn333 are each glycosylated (N-linked (GlcNAc...) asparagine).

This sequence belongs to the adipolin/erythroferrone family. In terms of assembly, homodimer; disulfide-linked. Forms trimer, hexamers and higher molecular weight oligomers. May form heteromeric complexes with C1QTNF2 and C1QTNF12 and, to a lesser extent, with C1QTNF5 and C1QTNF10. Interacts with BMP5 and BMP7; the interaction inhibits BMP-induced transcription of HAMP. Interacts with BMP6; the interaction inhibits BMP-induced transcription of HAMP. Interacts with BMP2. Interacts with heterodimers composed of BMP2 and BMP6 in vitro, the interaction inhibits the heterodimer binding to its receptor BMPR1A /ALK3 and thereby suppresses expression of HAMP. N-glycosylated; required for secretion of the mature protein.

It is found in the secreted. Iron-regulatory hormone that acts as an erythroid regulator after hemorrhage: produced by erythroblasts following blood loss and mediates suppression of hepcidin (HAMP) expression in the liver, thereby promoting increased iron absorption and mobilization from stores. Promotes lipid uptake into adipocytes and hepatocytes via transcriptional up-regulation of genes involved in fatty acid uptake. Inhibits apoptosis and inflammatory response in cardiomyocytes via promotion of sphingosine-1-phosphate (S1P) and cAMP-dependent activation of AKT signaling. Inhibits autophagy induced by nutrient deficiency in hepatocytes via promoting the phosphorylation of IRS1, AKT, and MTOR, and thereby subsequent activation of the AKT-MTOR signaling pathway. Negatively regulates the differentiation of osteoblasts, potentially via sequestering BMP2, and thereby inhibits the activation of SMAD signaling. The reduction in BMP2 signaling in osteoblasts also results in an increase in expression of the osteoclastogenesis-promoting factors TNFSF11/RANKL and SOST, thereby indirectly promotes bone resorption. The chain is Erythroferrone from Homo sapiens (Human).